A 298-amino-acid polypeptide reads, in one-letter code: Quinolinate synthase (298 aa).

Residues His-19 and Ser-36 each contribute to the iminosuccinate site. Residue Cys-81 participates in [4Fe-4S] cluster binding. Residues 107–109 and Ser-124 each bind iminosuccinate; that span reads YVN. Cys-168 serves as a coordination point for [4Fe-4S] cluster. Iminosuccinate contacts are provided by residues 193–195 and Thr-210; that span reads HPE. Cys-254 contacts [4Fe-4S] cluster.

This sequence belongs to the quinolinate synthase family. Type 2 subfamily. [4Fe-4S] cluster serves as cofactor.

The protein resides in the cytoplasm. The enzyme catalyses iminosuccinate + dihydroxyacetone phosphate = quinolinate + phosphate + 2 H2O + H(+). The protein operates within cofactor biosynthesis; NAD(+) biosynthesis; quinolinate from iminoaspartate: step 1/1. Its function is as follows. Catalyzes the condensation of iminoaspartate with dihydroxyacetone phosphate to form quinolinate. This Thermotoga petrophila (strain ATCC BAA-488 / DSM 13995 / JCM 10881 / RKU-1) protein is Quinolinate synthase.